A 191-amino-acid polypeptide reads, in one-letter code: Ureidoglycolate lyase (191 aa).

It belongs to the ureidoglycolate lyase family. Homodimer.

The catalysed reaction is (S)-ureidoglycolate = urea + glyoxylate. The protein operates within nitrogen metabolism; (S)-allantoin degradation. Catalyzes the catabolism of the allantoin degradation intermediate (S)-ureidoglycolate, generating urea and glyoxylate. Involved in the utilization of allantoin as secondary nitrogen source when primary sources are limiting. In Schizosaccharomyces pombe (strain 972 / ATCC 24843) (Fission yeast), this protein is Ureidoglycolate lyase.